Here is an 874-residue protein sequence, read N- to C-terminus: Valine--tRNA ligase (874 aa).

The short motif at 42–52 (PNITGRIHIGH) is the 'HIGH' region element. The 'KMSKS' region motif lies at 522-526 (KMSKS). Residue K525 coordinates ATP. Residues 806 to 874 (DYIDIDTEKQ…KLQALLKEIS (69 aa)) are a coiled coil.

It belongs to the class-I aminoacyl-tRNA synthetase family. ValS type 1 subfamily. As to quaternary structure, monomer.

It localises to the cytoplasm. It carries out the reaction tRNA(Val) + L-valine + ATP = L-valyl-tRNA(Val) + AMP + diphosphate. Its function is as follows. Catalyzes the attachment of valine to tRNA(Val). As ValRS can inadvertently accommodate and process structurally similar amino acids such as threonine, to avoid such errors, it has a 'posttransfer' editing activity that hydrolyzes mischarged Thr-tRNA(Val) in a tRNA-dependent manner. The sequence is that of Valine--tRNA ligase from Petrotoga mobilis (strain DSM 10674 / SJ95).